A 500-amino-acid polypeptide reads, in one-letter code: MSDLKTESQDLQQEENALIALRKEKLAAERAKGNAFPNDFRRDSYCNDLQKQYADKTKEELEAAAIPVKVAGRIMLNRGSFMVIQDMTGRIQVYVNRKTLPEETLAAVKTWDLGDIISAEGTLARSGKGDLYVEMTNVRLLTKSLRPLPDKHHGLTDTEQRYRQRYVDLMVNEETRHTFRVRSQVISHIRKFLIERDFLEVETPMLQTIPGGAAAKPFETHHNALDMAMFLRIAPELYLKRLVVGGFEKVFEINRNFRNEGVSTRHNPEFTMLEFYQAYADYRDNMDLTEELFRELAQLVLGSTDVPYGDKVFHFGEPFVRLSVFDSILKYNPELTAADLQDVDRAREIAKKAGAKVLGHEGLGKLQVMIFEELVEHKLEQPHFITEYPFEVSPLARRNDDNPAVTDRFELFIGGREIANAYSELNDAEDQAERFLAQVAEKDAGDDEAMHYDADFVRALEYGMPPTAGEGIGIDRLVMLLTNSPSIRDVILFPHMRPQA.

Mg(2+)-binding residues include E410 and E417.

Belongs to the class-II aminoacyl-tRNA synthetase family. In terms of assembly, homodimer. Requires Mg(2+) as cofactor.

The protein localises to the cytoplasm. It carries out the reaction tRNA(Lys) + L-lysine + ATP = L-lysyl-tRNA(Lys) + AMP + diphosphate. This is Lysine--tRNA ligase from Pseudomonas putida (strain ATCC 700007 / DSM 6899 / JCM 31910 / BCRC 17059 / LMG 24140 / F1).